Here is a 146-residue protein sequence, read N- to C-terminus: Hemoglobin subunit beta (146 aa).

Positions 2–146 (QWTAEEKQLI…VAHALARKYH (145 aa)) constitute a Globin domain. Heme b is bound by residues His-63 and His-92.

It belongs to the globin family. Heterotetramer of two alpha chains and two beta chains. As to expression, red blood cells.

Its function is as follows. Involved in oxygen transport from the lung to the various peripheral tissues. This chain is Hemoglobin subunit beta (HBB), found in Rhea americana (Greater rhea).